Consider the following 442-residue polypeptide: tRNA-2-methylthio-N(6)-dimethylallyladenosine synthase (442 aa).

The MTTase N-terminal domain maps to 3 to 120; that stretch reads KKLYIETHGC…LPEMIDAARI (118 aa). Residues Cys12, Cys49, Cys83, Cys157, Cys161, and Cys164 each contribute to the [4Fe-4S] cluster site. In terms of domain architecture, Radical SAM core spans 143–375; it reads RVDGPSAYVS…QHRLNQQGFE (233 aa). The TRAM domain occupies 378-442; it reads RQMVGSIQRI…PHSLRGSLLQ (65 aa).

The protein belongs to the methylthiotransferase family. MiaB subfamily. In terms of assembly, monomer. [4Fe-4S] cluster is required as a cofactor.

Its subcellular location is the cytoplasm. The enzyme catalyses N(6)-dimethylallyladenosine(37) in tRNA + (sulfur carrier)-SH + AH2 + 2 S-adenosyl-L-methionine = 2-methylsulfanyl-N(6)-dimethylallyladenosine(37) in tRNA + (sulfur carrier)-H + 5'-deoxyadenosine + L-methionine + A + S-adenosyl-L-homocysteine + 2 H(+). Its function is as follows. Catalyzes the methylthiolation of N6-(dimethylallyl)adenosine (i(6)A), leading to the formation of 2-methylthio-N6-(dimethylallyl)adenosine (ms(2)i(6)A) at position 37 in tRNAs that read codons beginning with uridine. The chain is tRNA-2-methylthio-N(6)-dimethylallyladenosine synthase from Pseudomonas savastanoi pv. phaseolicola (strain 1448A / Race 6) (Pseudomonas syringae pv. phaseolicola (strain 1448A / Race 6)).